The chain runs to 357 residues: 3-isopropylmalate dehydrogenase (357 aa).

Residues Arg-99, Arg-109, Arg-133, and Asp-223 each contribute to the substrate site. Residues Asp-223, Asp-247, and Asp-251 each contribute to the Mg(2+) site. 283–295 (GSAPDIAGEQRAD) is an NAD(+) binding site.

The protein belongs to the isocitrate and isopropylmalate dehydrogenases family. LeuB type 2 subfamily. In terms of assembly, homodimer. The cofactor is Mg(2+). It depends on Mn(2+) as a cofactor.

It is found in the cytoplasm. The enzyme catalyses (2R,3S)-3-isopropylmalate + NAD(+) = 4-methyl-2-oxopentanoate + CO2 + NADH. It participates in amino-acid biosynthesis; L-leucine biosynthesis; L-leucine from 3-methyl-2-oxobutanoate: step 3/4. Its function is as follows. Catalyzes the oxidation of 3-carboxy-2-hydroxy-4-methylpentanoate (3-isopropylmalate) to 3-carboxy-4-methyl-2-oxopentanoate. The product decarboxylates to 4-methyl-2 oxopentanoate. In Leifsonia xyli subsp. xyli (strain CTCB07), this protein is 3-isopropylmalate dehydrogenase.